The following is a 271-amino-acid chain: Imidazole glycerol phosphate synthase subunit HisF (271 aa).

Active-site residues include Asp12 and Asp136.

It belongs to the HisA/HisF family. In terms of assembly, heterodimer of HisH and HisF.

The protein resides in the cytoplasm. It carries out the reaction 5-[(5-phospho-1-deoxy-D-ribulos-1-ylimino)methylamino]-1-(5-phospho-beta-D-ribosyl)imidazole-4-carboxamide + L-glutamine = D-erythro-1-(imidazol-4-yl)glycerol 3-phosphate + 5-amino-1-(5-phospho-beta-D-ribosyl)imidazole-4-carboxamide + L-glutamate + H(+). The protein operates within amino-acid biosynthesis; L-histidine biosynthesis; L-histidine from 5-phospho-alpha-D-ribose 1-diphosphate: step 5/9. IGPS catalyzes the conversion of PRFAR and glutamine to IGP, AICAR and glutamate. The HisF subunit catalyzes the cyclization activity that produces IGP and AICAR from PRFAR using the ammonia provided by the HisH subunit. The polypeptide is Imidazole glycerol phosphate synthase subunit HisF (Natronomonas pharaonis (strain ATCC 35678 / DSM 2160 / CIP 103997 / JCM 8858 / NBRC 14720 / NCIMB 2260 / Gabara) (Halobacterium pharaonis)).